The following is a 721-amino-acid chain: 1,4-alpha-glucan branching enzyme GlgB (721 aa).

Aspartate 400 (nucleophile) is an active-site residue. Glutamate 453 acts as the Proton donor in catalysis.

It belongs to the glycosyl hydrolase 13 family. GlgB subfamily. In terms of assembly, monomer.

The catalysed reaction is Transfers a segment of a (1-&gt;4)-alpha-D-glucan chain to a primary hydroxy group in a similar glucan chain.. The protein operates within glycan biosynthesis; glycogen biosynthesis. Its function is as follows. Catalyzes the formation of the alpha-1,6-glucosidic linkages in glycogen by scission of a 1,4-alpha-linked oligosaccharide from growing alpha-1,4-glucan chains and the subsequent attachment of the oligosaccharide to the alpha-1,6 position. This chain is 1,4-alpha-glucan branching enzyme GlgB, found in Chlamydia abortus (strain DSM 27085 / S26/3) (Chlamydophila abortus).